We begin with the raw amino-acid sequence, 115 residues long: U3-lycotoxin-Ls1g (115 aa).

The signal sequence occupies residues 1-20 (MKFVLLFGVFLVTLFSYSSA). Positions 21 to 44 (EMLDDFDQADEDELLSLIEKEEAR) are excised as a propeptide. Disulfide bonds link cysteine 48/cysteine 63, cysteine 55/cysteine 72, cysteine 62/cysteine 87, and cysteine 74/cysteine 85.

This sequence belongs to the neurotoxin 19 (CSTX) family. 01 subfamily. In terms of tissue distribution, expressed by the venom gland.

Its subcellular location is the secreted. In Lycosa singoriensis (Wolf spider), this protein is U3-lycotoxin-Ls1g.